Consider the following 954-residue polypeptide: Glycine dehydrogenase (decarboxylating) (954 aa).

Lys706 carries the post-translational modification N6-(pyridoxal phosphate)lysine.

The protein belongs to the GcvP family. In terms of assembly, the glycine cleavage system is composed of four proteins: P, T, L and H. The cofactor is pyridoxal 5'-phosphate.

The catalysed reaction is N(6)-[(R)-lipoyl]-L-lysyl-[glycine-cleavage complex H protein] + glycine + H(+) = N(6)-[(R)-S(8)-aminomethyldihydrolipoyl]-L-lysyl-[glycine-cleavage complex H protein] + CO2. Functionally, the glycine cleavage system catalyzes the degradation of glycine. The P protein binds the alpha-amino group of glycine through its pyridoxal phosphate cofactor; CO(2) is released and the remaining methylamine moiety is then transferred to the lipoamide cofactor of the H protein. This chain is Glycine dehydrogenase (decarboxylating), found in Thermosynechococcus vestitus (strain NIES-2133 / IAM M-273 / BP-1).